Reading from the N-terminus, the 417-residue chain is Probable glucuronosyltransferase GUT1 (417 aa).

At 1–15 the chain is on the cytoplasmic side; that stretch reads MGTRRRSARARARPP. Residues 16-36 traverse the membrane as a helical; Signal-anchor for type II membrane protein segment; sequence LAMPLAVLLLFACSSGVAAAA. Topologically, residues 37–417 are lumenal; sequence AQGIERIKDD…EGTREDLKPW (381 aa). Residues N144 and N405 are each glycosylated (N-linked (GlcNAc...) asparagine).

Belongs to the glycosyltransferase 47 family.

The protein localises to the golgi apparatus membrane. Involved in the synthesis of glucuronoxylan hemicellulose in secondary cell walls. The polypeptide is Probable glucuronosyltransferase GUT1 (GUT1) (Oryza sativa subsp. japonica (Rice)).